The chain runs to 635 residues: Threonine--tRNA ligase (635 aa).

The region spanning 1-61 (MVSIRLPDGS…DHDASLAIVT (61 aa)) is the TGS domain. Residues 242-533 (DHRKLGKQLD…LIEHHAGAMP (292 aa)) form a catalytic region. Zn(2+) is bound by residues cysteine 333, histidine 384, and histidine 510.

It belongs to the class-II aminoacyl-tRNA synthetase family. Homodimer. Requires Zn(2+) as cofactor.

The protein resides in the cytoplasm. The catalysed reaction is tRNA(Thr) + L-threonine + ATP = L-threonyl-tRNA(Thr) + AMP + diphosphate + H(+). Functionally, catalyzes the attachment of threonine to tRNA(Thr) in a two-step reaction: L-threonine is first activated by ATP to form Thr-AMP and then transferred to the acceptor end of tRNA(Thr). Also edits incorrectly charged L-seryl-tRNA(Thr). This is Threonine--tRNA ligase from Burkholderia multivorans (strain ATCC 17616 / 249).